Consider the following 185-residue polypeptide: Ribosome-recycling factor (185 aa).

This sequence belongs to the RRF family.

The protein resides in the cytoplasm. Functionally, responsible for the release of ribosomes from messenger RNA at the termination of protein biosynthesis. May increase the efficiency of translation by recycling ribosomes from one round of translation to another. In Thermotoga sp. (strain RQ2), this protein is Ribosome-recycling factor.